Reading from the N-terminus, the 397-residue chain is Elongation factor Tu (397 aa).

Residues 10 to 207 enclose the tr-type G domain; the sequence is KPHVNIGTIG…VLDEYVKEPV (198 aa). A G1 region spans residues 19 to 26; that stretch reads GHIDHGKT. Residue 19-26 participates in GTP binding; the sequence is GHIDHGKT. Threonine 26 is a Mg(2+) binding site. The segment at 60-64 is G2; the sequence is GITIS. A G3 region spans residues 81–84; sequence DCPG. GTP is bound by residues 81–85 and 136–139; these read DCPGH and NKCD. A G4 region spans residues 136–139; sequence NKCD. A G5 region spans residues 174–176; sequence SAL.

This sequence belongs to the TRAFAC class translation factor GTPase superfamily. Classic translation factor GTPase family. EF-Tu/EF-1A subfamily. As to quaternary structure, monomer.

The protein resides in the cytoplasm. It carries out the reaction GTP + H2O = GDP + phosphate + H(+). Its function is as follows. GTP hydrolase that promotes the GTP-dependent binding of aminoacyl-tRNA to the A-site of ribosomes during protein biosynthesis. This Desulforapulum autotrophicum (strain ATCC 43914 / DSM 3382 / VKM B-1955 / HRM2) (Desulfobacterium autotrophicum) protein is Elongation factor Tu.